A 377-amino-acid chain; its full sequence is Queuine tRNA-ribosyltransferase (377 aa).

The active-site Proton acceptor is D89. Substrate is bound by residues 89–93, D143, Q188, and G215; that span reads DSGGF. The RNA binding stretch occupies residues 246–252; it reads GVGKPED. D265 acts as the Nucleophile in catalysis. The RNA binding; important for wobble base 34 recognition stretch occupies residues 270–274; sequence TRNAR. Positions 303, 305, 308, and 334 each coordinate Zn(2+).

It belongs to the queuine tRNA-ribosyltransferase family. In terms of assembly, homodimer. Within each dimer, one monomer is responsible for RNA recognition and catalysis, while the other monomer binds to the replacement base PreQ1. It depends on Zn(2+) as a cofactor.

It carries out the reaction 7-aminomethyl-7-carbaguanine + guanosine(34) in tRNA = 7-aminomethyl-7-carbaguanosine(34) in tRNA + guanine. It participates in tRNA modification; tRNA-queuosine biosynthesis. In terms of biological role, catalyzes the base-exchange of a guanine (G) residue with the queuine precursor 7-aminomethyl-7-deazaguanine (PreQ1) at position 34 (anticodon wobble position) in tRNAs with GU(N) anticodons (tRNA-Asp, -Asn, -His and -Tyr). Catalysis occurs through a double-displacement mechanism. The nucleophile active site attacks the C1' of nucleotide 34 to detach the guanine base from the RNA, forming a covalent enzyme-RNA intermediate. The proton acceptor active site deprotonates the incoming PreQ1, allowing a nucleophilic attack on the C1' of the ribose to form the product. After dissociation, two additional enzymatic reactions on the tRNA convert PreQ1 to queuine (Q), resulting in the hypermodified nucleoside queuosine (7-(((4,5-cis-dihydroxy-2-cyclopenten-1-yl)amino)methyl)-7-deazaguanosine). The sequence is that of Queuine tRNA-ribosyltransferase from Acinetobacter baumannii (strain ACICU).